The sequence spans 477 residues: UTP--glucose-1-phosphate uridylyltransferase (477 aa).

An N-acetylalanine modification is found at alanine 2. UTP is bound by residues 92–95 (LNGG), lysine 106, glutamine 169, and glycine 198. 94–95 (GG) contacts substrate. Residues histidine 199 and 227-229 (NSD) contribute to the substrate site. Positions 229 and 367 each coordinate UTP.

This sequence belongs to the UDPGP type 1 family. As to quaternary structure, monomer. The cofactor is Mg(2+).

The protein localises to the cytoplasm. The enzyme catalyses alpha-D-glucose 1-phosphate + UTP + H(+) = UDP-alpha-D-glucose + diphosphate. With respect to regulation, inhibition by uncomplexed, free UTP. In terms of biological role, plays a central role as a glucosyl donor in cellular metabolic pathways. The polypeptide is UTP--glucose-1-phosphate uridylyltransferase (Solanum tuberosum (Potato)).